The sequence spans 154 residues: Myoglobin-2 (154 aa).

The region spanning 2-148 is the Globin domain; that stretch reads GLSDGEWQLV…FRKDIATKYK (147 aa). Residue histidine 65 coordinates nitrite. Histidine 65 serves as a coordination point for O2. A heme b-binding site is contributed by histidine 94.

The protein belongs to the globin family. As to quaternary structure, monomeric.

The protein resides in the cytoplasm. It is found in the sarcoplasm. The catalysed reaction is Fe(III)-heme b-[protein] + nitric oxide + H2O = Fe(II)-heme b-[protein] + nitrite + 2 H(+). The enzyme catalyses H2O2 + AH2 = A + 2 H2O. Its function is as follows. Monomeric heme protein which primary function is to store oxygen and facilitate its diffusion within muscle tissues. Reversibly binds oxygen through a pentacoordinated heme iron and enables its timely and efficient release as needed during periods of heightened demand. Depending on the oxidative conditions of tissues and cells, and in addition to its ability to bind oxygen, it also has a nitrite reductase activity whereby it regulates the production of bioactive nitric oxide. Under stress conditions, like hypoxia and anoxia, it also protects cells against reactive oxygen species thanks to its pseudoperoxidase activity. The sequence is that of Myoglobin-2 (MB2) from Stenella attenuata (Pantropical spotted dolphin).